Consider the following 335-residue polypeptide: Olfactory receptor 52B6 (335 aa).

Residues 1-45 (MAQVRALHKIMALFSANSIGAMNNSDTRIAGCFLTGIPGLEQLHI) lie on the Extracellular side of the membrane. A glycan (N-linked (GlcNAc...) asparagine) is linked at Asn-23. The helical transmembrane segment at 46–66 (WLSIPFCIMYITALEGNGILI) threads the bilayer. The Cytoplasmic portion of the chain corresponds to 67–74 (CVILSQAI). A helical transmembrane segment spans residues 75–95 (LHEPMYIFLSMLASADVLLST). The Extracellular segment spans residues 96-119 (TTMPKALANLWLGYSLISFDGCLT). Cys-117 and Cys-208 form a disulfide bridge. A helical membrane pass occupies residues 120 to 139 (QMFFIHFLFIHSAVLLAMAF). The Cytoplasmic portion of the chain corresponds to 140-158 (DRYVAICSPLRYVTILTSK). A helical membrane pass occupies residues 159 to 179 (VIGKIVTAALSHSFIIMFPSI). Topologically, residues 180–215 (FLLEHLHYCQINIIAHTFCEHMGIAHLSCSDISINV) are extracellular. A helical membrane pass occupies residues 216–236 (WYGLAAALLSTGLDIMLITVS). Topologically, residues 237–256 (YIHILQAVFRLLSQDARSKA) are cytoplasmic. The helical transmembrane segment at 257–277 (LSTCGSHICVILLFYVPALFS) threads the bilayer. At 278–293 (VFAYRFGGRSVPCYVH) the chain is on the extracellular side. The helical transmembrane segment at 294–314 (ILLASLYVVIPPMLNPVIYGV) threads the bilayer. Residues 315-335 (RTKPILEGAKQMFSNLAKGSK) lie on the Cytoplasmic side of the membrane.

The protein belongs to the G-protein coupled receptor 1 family.

The protein resides in the cell membrane. In terms of biological role, odorant receptor. This Homo sapiens (Human) protein is Olfactory receptor 52B6 (OR52B6).